The primary structure comprises 296 residues: 5,10-methylenetetrahydrofolate reductase (296 aa).

E28 (proton donor/acceptor) is an active-site residue. T59 provides a ligand contact to NADH. Residues Y60, A62, H88, R118, G119, D120, A132, Y152, H156, A159, D165, N168, R171, and K172 each coordinate FAD. Residue D120 participates in (6S)-5-methyl-5,6,7,8-tetrahydrofolate binding. NADH is bound at residue Q183. Q183, Q219, and R279 together coordinate (6S)-5-methyl-5,6,7,8-tetrahydrofolate.

Belongs to the methylenetetrahydrofolate reductase family. Requires FAD as cofactor.

The enzyme catalyses (6S)-5-methyl-5,6,7,8-tetrahydrofolate + NAD(+) = (6R)-5,10-methylene-5,6,7,8-tetrahydrofolate + NADH + H(+). Its pathway is one-carbon metabolism; tetrahydrofolate interconversion. The protein operates within amino-acid biosynthesis; L-methionine biosynthesis via de novo pathway. Its function is as follows. Catalyzes the NADH-dependent reduction of 5,10-methylenetetrahydrofolate to 5-methyltetrahydrofolate. Is required to provide the methyl group necessary for methionine synthetase to convert homocysteine to methionine; the methyl group is given by 5-methyltetrahydrofolate. This is 5,10-methylenetetrahydrofolate reductase (metF) from Salmonella typhimurium (strain LT2 / SGSC1412 / ATCC 700720).